Reading from the N-terminus, the 1013-residue chain is Putative DNA polymerase 060R (1013 aa).

Belongs to the DNA polymerase type-B family.

It catalyses the reaction DNA(n) + a 2'-deoxyribonucleoside 5'-triphosphate = DNA(n+1) + diphosphate. Its function is as follows. DNA-directed DNA polymerase involved in viral DNA replication. This is Putative DNA polymerase 060R from Dryophytes versicolor (chameleon treefrog).